Consider the following 267-residue polypeptide: C-type lectin domain family 12 member A (267 aa).

Over M1–V43 the chain is Cytoplasmic. Positions I5–L10 match the ITIM motif motif. Position 7 is a phosphotyrosine (Y7). The chain crosses the membrane as a helical; Signal-anchor for type II membrane protein span at residues L44–F64. Residues Y65–R267 are Extracellular-facing. Residues N98 and N105 are each glycosylated (N-linked (GlcNAc...) asparagine). Disulfide bonds link C118/C130, C133/C144, C161/C246, and C225/C238. The C-type lectin domain maps to Y140–E247. The N-linked (GlcNAc...) asparagine glycan is linked to N165.

In terms of assembly, homodimer; disulfide-linked. Interacts (when the ITIM motif is phosphorylated) with PTPN6 and PTPN11. Phosphorylated at Tyr-7 by SRC in the ITIM motif following ligand-binding, promoting recruitment of tyrosine-protein phosphatases PTPN6 and PTPN11. In terms of tissue distribution, mainly expressed in lymphoid tissues. Preferentially expressed in peripheral blood leukocytes; less frequent in thymus, spleen, heart, brain and lung; and undetectable in other tissues.

Its subcellular location is the cell membrane. Myeloid inhibitory C-type lectin receptor that acts as a negative regulator of myeloid cell activation. Myeloid cell inhibition is required to limit proinflammatory pathways and protect against excessive inflammation. Specifically recognizes and binds various structures, such as neutrophil extracellular traps (NETs) or monosodium urate crystals. Also acts as a pattern-recognition receptor for pathogen-associated molecules, such as plasmodium hemozoin or mycobacterial micolic acid. Ligand-binding induces phosphorylation of its ITIM motif, followed by recruitment of tyrosine-protein phosphatases PTPN6 and PTPN11, which counteract tyrosine-protein kinase SYK, thereby preventing myeloid cell activation. Acts as a pattern-recognition receptor for NETs in neutrophils: specifically recognizes DNA in NETs, leading to inhibit neutrophil activation and limit further NET formation. This regulation is essential for controlling key neutrophil responses and limit NET-mediated inflammatory conditions. Also recognizes dead cells by acting as a receptor for monosodium urate crystals, leading to down-regulate neutrophil activation. Binding to monosodium urate crystals also promotes the type I interferon response. Acts as an inhibitor of natural killer (NK) cell cytotoxicity. Also acts as an ihibitor of dendritic cell maturation in an IL10-dependent manner. This chain is C-type lectin domain family 12 member A, found in Mus musculus (Mouse).